Consider the following 496-residue polypeptide: Alanine aminotransferase 1 (496 aa).

Alanine 2 is modified (N-acetylalanine). Threonine 22 bears the Phosphothreonine mark. At lysine 314 the chain carries N6-(pyridoxal phosphate)lysine.

The protein belongs to the class-I pyridoxal-phosphate-dependent aminotransferase family. Alanine aminotransferase subfamily. Homodimer. Pyridoxal 5'-phosphate is required as a cofactor. Liver, kidney, heart, and skeletal muscles. Expressed at moderate levels in the adipose tissue.

The protein localises to the cytoplasm. The enzyme catalyses L-alanine + 2-oxoglutarate = pyruvate + L-glutamate. It functions in the pathway amino-acid degradation; L-alanine degradation via transaminase pathway; pyruvate from L-alanine: step 1/1. Its function is as follows. Catalyzes the reversible transamination between alanine and 2-oxoglutarate to form pyruvate and glutamate. Participates in cellular nitrogen metabolism and also in liver gluconeogenesis starting with precursors transported from skeletal muscles. In Homo sapiens (Human), this protein is Alanine aminotransferase 1 (GPT).